A 547-amino-acid chain; its full sequence is Chaperonin GroEL (547 aa).

ATP is bound by residues 30-33, K51, 87-91, G415, and D495; these read TLGP and DGTTT. The interval 525 to 547 is disordered; sequence PDEKEAGGGAPDMGGMGGMGGMM. Residues 531 to 547 are compositionally biased toward gly residues; that stretch reads GGGAPDMGGMGGMGGMM.

This sequence belongs to the chaperonin (HSP60) family. As to quaternary structure, forms a cylinder of 14 subunits composed of two heptameric rings stacked back-to-back. Interacts with the co-chaperonin GroES.

It localises to the cytoplasm. It catalyses the reaction ATP + H2O + a folded polypeptide = ADP + phosphate + an unfolded polypeptide.. Its function is as follows. Together with its co-chaperonin GroES, plays an essential role in assisting protein folding. The GroEL-GroES system forms a nano-cage that allows encapsulation of the non-native substrate proteins and provides a physical environment optimized to promote and accelerate protein folding. This chain is Chaperonin GroEL, found in Chromohalobacter salexigens (strain ATCC BAA-138 / DSM 3043 / CIP 106854 / NCIMB 13768 / 1H11).